The following is a 367-amino-acid chain: Heme A synthase (367 aa).

5 helical membrane-spanning segments follow: residues 25 to 45 (ALRFWLGFVLLALFCLVLVGG), 111 to 131 (LIARAIGVIFALPLIYFWLTG), 139 to 159 (WPLVGILALGGLQGGIGWWMV), 174 to 194 (LATHLVMACLIFAGCMWIMRG), and 210 to 230 (GFAAAIAIFSLFQIYLGALVA). His-274 is a heme binding site. Transmembrane regions (helical) follow at residues 276 to 296 (IGAYTLFALTLINMVIALRAA), 305 to 325 (AILLFVLVTLQAAIGIATLLM), and 327 to 347 (VPLHWGLLHQAGALVVFGFAV). Position 335 (His-335) interacts with heme.

It belongs to the COX15/CtaA family. Type 2 subfamily. Interacts with CtaB. Heme b is required as a cofactor.

The protein resides in the cell membrane. It catalyses the reaction Fe(II)-heme o + 2 A + H2O = Fe(II)-heme a + 2 AH2. Its pathway is porphyrin-containing compound metabolism; heme A biosynthesis; heme A from heme O: step 1/1. Functionally, catalyzes the conversion of heme O to heme A by two successive hydroxylations of the methyl group at C8. The first hydroxylation forms heme I, the second hydroxylation results in an unstable dihydroxymethyl group, which spontaneously dehydrates, resulting in the formyl group of heme A. The sequence is that of Heme A synthase from Rhizobium johnstonii (strain DSM 114642 / LMG 32736 / 3841) (Rhizobium leguminosarum bv. viciae).